Reading from the N-terminus, the 354-residue chain is D-alanine--D-alanine ligase (354 aa).

Residues 132–342 enclose the ATP-grasp domain; that stretch reads KMVFERAGLP…FPSLVDRLLQ (211 aa). 168–223 is an ATP binding site; sequence EAQVGYPCFVKPANLGSSVGIAKVRNRSELEAALDNAASYDRRIIVEAGLTDIREV. Residues Asp-295, Glu-309, and Asn-311 each coordinate Mg(2+).

Belongs to the D-alanine--D-alanine ligase family. The cofactor is Mg(2+). Mn(2+) is required as a cofactor.

It localises to the cytoplasm. The catalysed reaction is 2 D-alanine + ATP = D-alanyl-D-alanine + ADP + phosphate + H(+). Its pathway is cell wall biogenesis; peptidoglycan biosynthesis. Cell wall formation. The polypeptide is D-alanine--D-alanine ligase (Synechocystis sp. (strain ATCC 27184 / PCC 6803 / Kazusa)).